Consider the following 142-residue polypeptide: Large ribosomal subunit protein uL11 (142 aa).

It belongs to the universal ribosomal protein uL11 family. As to quaternary structure, part of the ribosomal stalk of the 50S ribosomal subunit. Interacts with L10 and the large rRNA to form the base of the stalk. L10 forms an elongated spine to which L12 dimers bind in a sequential fashion forming a multimeric L10(L12)X complex. One or more lysine residues are methylated.

Functionally, forms part of the ribosomal stalk which helps the ribosome interact with GTP-bound translation factors. The sequence is that of Large ribosomal subunit protein uL11 from Vesicomyosocius okutanii subsp. Calyptogena okutanii (strain HA).